The following is a 503-amino-acid chain: MAAYASRWRTDCLLRLVFKKTRLSKQVCCEVCKASRGCSTTSTGHTSTSAPWPVYGRLVTHYDSLVHFGSLRKDPQQRTALLQLEELTRVLTDYTNIPILLPQPKDCLQNQPTSELQDKVGSRETVNICRPDENVSNEKEDQQEESSKPHPPQGYYIYGNVGTGKTMLMDLFYSFVENRRKKRVHFNGFMLDVHRRIHKLKQSLPKRRIGKMTMYDPIFPVAMEIAEETCLICFDEFQVVDIADAMILKQLFEGLFKCGVVVVATSNRPPEELYKNGLQRAAFVPFIGVLKEYCRIVSLDTGIDFRTREMKPAGRLYYISSEPDAENAVNALFEELAFRQNDVTRPRVLNVQGREVTLSRTCGTIADCSFQELCEQPLGAGDYLEIARCFDTVIIRNVPYLQLGMKDQARRFTTLIDNFYDQKVRVVMLADAPLDRLLDQGQMTGEEARDRLMLDELGLTDEASKRITLFTADEEIFAFQRTVSRLAEMQTEQYWISGDRSQS.

The segment at L108–Y155 is disordered. Residues R130–K148 show a composition bias toward basic and acidic residues. G159 to T166 is an ATP binding site.

This sequence belongs to the AFG1 ATPase family.

This is Lactation elevated protein 1 homolog B (lace1b) from Danio rerio (Zebrafish).